A 422-amino-acid polypeptide reads, in one-letter code: MFAFEEFSEQSICQARASVMVYDDTSKKWVPIKPGQQGFSRINIYHNTASNTFRVVGVKLQDQQVVINYSIVKGLKYNQATPTFHQWRDARQVYGLNFASKEEATTFSNAMLFALNIMNSQEGGPSSQRQVQNGPSPDEMDIQRRQVMEQHQQQRQESLERRTSATGPILPPGHPSSAASAPVSCSGPPPPPPPPVPPPPTGATPPPPPPLPAGGAQGSSHDESSVSGLAAAIAGAKLRRVQRPEDASGGSSPSGTSKSDANRASSGGGGGGLMEEMNKLLAKRRKAASQSDKPAEKKEDESQTEDPSTSPSPGTRAASQPPNSSEAGRKPWERSNSVEKPVSSILSRTPSVAKSPEAKSPLQSQPHSRMKPAGSVNDMALDAFDLDRMKQEILEEVVRELHKVKDEIIDAIRQELSGISTT.

In terms of domain architecture, WH1 spans 4-118 (FEEFSEQSIC…NAMLFALNIM (115 aa)). Positions 120–135 (SQEGGPSSQRQVQNGP) are enriched in polar residues. Disordered stretches follow at residues 120–139 (SQEG…SPDE) and 147–375 (VMEQ…PAGS). Serine 136 bears the Phosphoserine mark. Residues 147–163 (VMEQHQQQRQESLERRT) show a composition bias toward basic and acidic residues. Low complexity predominate over residues 175-186 (PSSAASAPVSCS). The span at 187-212 (GPPPPPPPPVPPPPTGATPPPPPPLP) shows a compositional bias: pro residues. The segment at 228 to 248 (GLAAAIAGAKLRRVQRPEDAS) is EVH2 block A. The segment at 228–419 (GLAAAIAGAK…DAIRQELSGI (192 aa)) is EVH2. Positions 237 to 240 (KLRR) match the KLKR motif. A compositionally biased stretch (low complexity) spans 248–259 (SGGSSPSGTSKS). 2 positions are modified to phosphoserine: serine 252 and serine 265. Positions 271-288 (GGLMEEMNKLLAKRRKAA) are EVH2 block B. A compositionally biased stretch (polar residues) spans 305–326 (EDPSTSPSPGTRAASQPPNSSE). Phosphoserine occurs at positions 310, 312, 335, 337, 347, 355, 360, and 375. A compositionally biased stretch (basic and acidic residues) spans 327-337 (AGRKPWERSNS). A required for interaction with ZDHHC17 region spans residues 348–368 (RTPSVAKSPEAKSPLQSQPHS). The EVH2 block C stretch occupies residues 385-419 (DLDRMKQEILEEVVRELHKVKDEIIDAIRQELSGI). Residues 388-414 (RMKQEILEEVVRELHKVKDEIIDAIRQ) are a coiled coil.

This sequence belongs to the Ena/VASP family. As to quaternary structure, homotetramer. Binds to the SH3 domains of ABL1, LYN and SRC. Also binds to profilin, with preference for isoform IIa of PFN2, and the WW domain of APBB1/FE65. Binds to SEMA6A. Interacts, via the Pro-rich region, with the C-terminal SH3 domain of DNMBP. Interacts with RAPH1. Binds, via the EVH1 domain, the Pro-rich domain of Listeria monocytogenes actA. Binds, via the EVH1 domain, the Pro-rich domain of ZYX. Interacts with FYB1. Interacts with ZDHHC17. Phosphorylated by PKA; phosphorylation abolishes binding to SH3 domains of ABL and SRC.

The protein localises to the cytoplasm. The protein resides in the cytoskeleton. Its subcellular location is the stress fiber. It localises to the cell projection. It is found in the lamellipodium. Functionally, ena/VASP proteins are actin-associated proteins involved in a range of processes dependent on cytoskeleton remodeling and cell polarity such as axon guidance and lamellipodial and filopodial dynamics in migrating cells. EVL enhances actin nucleation and polymerization. This is Ena/VASP-like protein (EVL) from Pongo abelii (Sumatran orangutan).